Consider the following 31-residue polypeptide: Kallikrein-1 (31 aa).

One can recognise a Peptidase S1 domain in the interval 1–31; it reads VIGGQECARDSHPWQAAVYHFSDIECGGVLV.

Belongs to the peptidase S1 family. Kallikrein subfamily.

It catalyses the reaction Preferential cleavage of Arg-|-Xaa bonds in small molecule substrates. Highly selective action to release kallidin (lysyl-bradykinin) from kininogen involves hydrolysis of Met-|-Xaa or Leu-|-Xaa.. Glandular kallikreins cleave Met-Lys and Arg-Ser bonds in kininogen to release Lys-bradykinin. This is Kallikrein-1 from Cavia porcellus (Guinea pig).